The chain runs to 242 residues: Succinyl-CoA:3-ketoacid coenzyme A transferase subunit A (242 aa).

33-39 (GGFGLCG) is a binding site for CoA.

It belongs to the 3-oxoacid CoA-transferase subunit A family. As to quaternary structure, heterodimer of a subunit A and a subunit B.

It catalyses the reaction a 3-oxo acid + succinyl-CoA = a 3-oxoacyl-CoA + succinate. The protein operates within bacterial outer membrane biogenesis; lipopolysaccharide biosynthesis. This Xanthomonas campestris pv. campestris (strain B100) protein is Succinyl-CoA:3-ketoacid coenzyme A transferase subunit A (lpsI).